Consider the following 142-residue polypeptide: Hemoglobin subunit alpha-A (142 aa).

The Globin domain occupies 2 to 142; the sequence is VLSAADKTNV…VGAVLTAKYR (141 aa). Residue histidine 59 coordinates O2. Residue histidine 88 coordinates heme b.

It belongs to the globin family. Heterotetramer of two alpha chains and two beta chains. Red blood cells.

Its function is as follows. Involved in oxygen transport from the lung to the various peripheral tissues. The protein is Hemoglobin subunit alpha-A (HBAA) of Cairina moschata (Muscovy duck).